Reading from the N-terminus, the 91-residue chain is Large ribosomal subunit protein bL27 (91 aa).

The segment at 1–22 (MAHKKAGGSSRNGRDSDGRRLG) is disordered.

Belongs to the bacterial ribosomal protein bL27 family.

The polypeptide is Large ribosomal subunit protein bL27 (Beijerinckia indica subsp. indica (strain ATCC 9039 / DSM 1715 / NCIMB 8712)).